Reading from the N-terminus, the 411-residue chain is Acetylornithine aminotransferase (411 aa).

Pyridoxal 5'-phosphate-binding positions include 107–108 (GT) and F141. R144 is a binding site for N(2)-acetyl-L-ornithine. Pyridoxal 5'-phosphate is bound at residue 227–230 (DEIQ). K256 carries the N6-(pyridoxal phosphate)lysine modification. T284 provides a ligand contact to N(2)-acetyl-L-ornithine. T285 lines the pyridoxal 5'-phosphate pocket.

This sequence belongs to the class-III pyridoxal-phosphate-dependent aminotransferase family. ArgD subfamily. As to quaternary structure, homodimer. The cofactor is pyridoxal 5'-phosphate.

It is found in the cytoplasm. The enzyme catalyses N(2)-acetyl-L-ornithine + 2-oxoglutarate = N-acetyl-L-glutamate 5-semialdehyde + L-glutamate. It functions in the pathway amino-acid biosynthesis; L-arginine biosynthesis; N(2)-acetyl-L-ornithine from L-glutamate: step 4/4. The protein is Acetylornithine aminotransferase of Xylella fastidiosa (strain Temecula1 / ATCC 700964).